The sequence spans 103 residues: MSGRGKGGKGLGKGGAKRHRKVLRDNIQGITKPAIRRLARRGGVKRISGLIYEETRTVLKNFLENVIRDSVTYTEHARRKTVTAMDVVYALKRQGRTLYGFGG.

Residues 1–14 are compositionally biased toward gly residues; sequence MSGRGKGGKGLGKG. Residues 1–20 form a disordered region; it reads MSGRGKGGKGLGKGGAKRHR. Residues 17-21 mediate DNA binding; it reads KRHRK.

Belongs to the histone H4 family. In terms of assembly, the nucleosome is a histone octamer containing two molecules each of H2A, H2B, H3 and H4 assembled in one H3-H4 heterotetramer and two H2A-H2B heterodimers. The octamer wraps approximately 147 bp of DNA.

Its subcellular location is the nucleus. It localises to the chromosome. Core component of nucleosome. Nucleosomes wrap and compact DNA into chromatin, limiting DNA accessibility to the cellular machineries which require DNA as a template. Histones thereby play a central role in transcription regulation, DNA repair, DNA replication and chromosomal stability. DNA accessibility is regulated via a complex set of post-translational modifications of histones, also called histone code, and nucleosome remodeling. The chain is Histone H4 (H4-I) from Volvox carteri (Green alga).